Consider the following 452-residue polypeptide: Proline--tRNA ligase (452 aa).

Belongs to the class-II aminoacyl-tRNA synthetase family. ProS type 2 subfamily. Homodimer.

The protein localises to the cytoplasm. The enzyme catalyses tRNA(Pro) + L-proline + ATP = L-prolyl-tRNA(Pro) + AMP + diphosphate. In terms of biological role, catalyzes the attachment of proline to tRNA(Pro) in a two-step reaction: proline is first activated by ATP to form Pro-AMP and then transferred to the acceptor end of tRNA(Pro). The chain is Proline--tRNA ligase from Jannaschia sp. (strain CCS1).